Here is a 197-residue protein sequence, read N- to C-terminus: EF-hand calcium-binding domain-containing protein 9 (197 aa).

Ca(2+) contacts are provided by aspartate 58 and aspartate 69. 3 consecutive EF-hand domains span residues leucine 59 to histidine 94, glycine 100 to asparagine 135, and isoleucine 136 to lysine 171. Ca(2+) is bound by residues aspartate 149, aspartate 153, arginine 155, and glutamate 160. Basic and acidic residues predominate over residues lysine 177 to arginine 188. The interval lysine 177 to lysine 197 is disordered.

Component of the CatSper complex or CatSpermasome composed of the core pore-forming members CATSPER1, CATSPER2, CATSPER3 and CATSPER4 as well as auxiliary members CATSPERB, CATSPERG, CATSPERD, CATSPERE, CATSPERZ, C2CD6/CATSPERT, TMEM249, TMEM262 and EFCAB9. HSPA1 may be an additional auxiliary complex member. The core complex members CATSPER1, CATSPER2, CATSPER3 and CATSPER4 form a heterotetrameric channel. The auxiliary CATSPERB, CATSPERG, CATSPERD and CATSPERE subunits form a pavilion-like structure over the pore which stabilizes the complex through interactions with CATSPER4, CATSPER3, CATSPER1 and CATSPER2 respectively. TMEM262/CATSPERH interacts with CATSPERB, further stabilizing the complex. C2CD6/CATSPERT interacts at least with CATSPERD and is required for targeting the CatSper complex in the flagellar membrane. Interacts with CATSPERZ; the interaction is direct, Ca(2+)-dependent and connects EFCAB9 with the CatSper complex. Dissociates from CATSPERZ at elevated pH.

It localises to the cytoplasm. The protein resides in the cell projection. The protein localises to the cilium. Its subcellular location is the flagellum. Its function is as follows. Auxiliary component of the CatSper complex, a complex involved in sperm cell hyperactivation. pH-dependent Ca(2+) sensor required to activate the CatSper channel. Sperm cell hyperactivation is needed for sperm motility which is essential late in the preparation of sperm for fertilization. Associates with the CatSper complex via direct interaction with CATSPERZ, and senses intracellular Ca(2+). Together with CATSPERZ, associates with the CatSper channel pore and is required for the two-row structure of each single CatSper channel. The polypeptide is EF-hand calcium-binding domain-containing protein 9 (Homo sapiens (Human)).